Consider the following 59-residue polypeptide: Large ribosomal subunit protein uL30 (59 aa).

Belongs to the universal ribosomal protein uL30 family. In terms of assembly, part of the 50S ribosomal subunit.

The sequence is that of Large ribosomal subunit protein uL30 from Leptospira interrogans serogroup Icterohaemorrhagiae serovar copenhageni (strain Fiocruz L1-130).